A 198-amino-acid chain; its full sequence is Dephospho-CoA kinase (198 aa).

The DPCK domain occupies 3–198; it reads IVGITGGIGS…LLAKERLELA (196 aa). 11 to 16 provides a ligand contact to ATP; that stretch reads GSGKTT.

This sequence belongs to the CoaE family.

Its subcellular location is the cytoplasm. The catalysed reaction is 3'-dephospho-CoA + ATP = ADP + CoA + H(+). It participates in cofactor biosynthesis; coenzyme A biosynthesis; CoA from (R)-pantothenate: step 5/5. Its function is as follows. Catalyzes the phosphorylation of the 3'-hydroxyl group of dephosphocoenzyme A to form coenzyme A. This Dehalococcoides mccartyi (strain ATCC BAA-2266 / KCTC 15142 / 195) (Dehalococcoides ethenogenes (strain 195)) protein is Dephospho-CoA kinase.